The primary structure comprises 548 residues: Alpha-humulene synthase (548 aa).

Mg(2+) contacts are provided by Asp-302, Asp-306, and Glu-453. A DDXXD motif motif is present at residues 302–306 (DDIYD).

It belongs to the terpene synthase family. In terms of tissue distribution, mostly expressed in rhizomes.

The enzyme catalyses (2E,6E)-farnesyl diphosphate = alpha-humulene + diphosphate. In terms of biological role, catalyzes the formation of alpha-humulene in the first step of zerumbone biosynthesis, a highly promising multi-anticancer agent. Also mediates formation of beta-caryophyllene at a much lower level. This is Alpha-humulene synthase (ZSS1) from Zingiber zerumbet (Shampoo ginger).